The primary structure comprises 329 residues: tRNA uridine(34) hydroxylase (329 aa).

The region spanning 123–217 is the Rhodanese domain; it reads SDPETVLIDT…YLEEVPKEKS (95 aa). Cys-177 serves as the catalytic Cysteine persulfide intermediate. Residues 310–329 form a disordered region; that stretch reads LNKQKKQQAKEAARKKTEKN. Positions 317–329 are enriched in basic and acidic residues; the sequence is QAKEAARKKTEKN.

Belongs to the TrhO family.

It carries out the reaction uridine(34) in tRNA + AH2 + O2 = 5-hydroxyuridine(34) in tRNA + A + H2O. Its function is as follows. Catalyzes oxygen-dependent 5-hydroxyuridine (ho5U) modification at position 34 in tRNAs. The sequence is that of tRNA uridine(34) hydroxylase from Francisella tularensis subsp. novicida (strain U112).